A 415-amino-acid polypeptide reads, in one-letter code: Hepatocyte nuclear factor 3-beta (415 aa).

The fork-head DNA-binding region spans 150 to 244; it reads KPPYSYISLI…ENGCYLRRQK (95 aa). Residues 251 to 262 show a composition bias toward basic and acidic residues; sequence KMSMKEPGRKGG. Residues 251–324 are disordered; the sequence is KMSMKEPGRK…GQHLMSQHHS (74 aa). Low complexity predominate over residues 266 to 277; that stretch reads SANSSSDSCNGN. Positions 310–323 are enriched in polar residues; that stretch reads SPVSQGQHLMSQHH.

The protein localises to the nucleus. Its function is as follows. Transcription activator for a number of liver genes. Interacts with the cis-acting regulatory regions of these genes. The protein is Hepatocyte nuclear factor 3-beta (foxa2) of Oryzias latipes (Japanese rice fish).